The sequence spans 688 residues: Glycine--tRNA ligase beta subunit (688 aa).

It belongs to the class-II aminoacyl-tRNA synthetase family. In terms of assembly, tetramer of two alpha and two beta subunits.

It localises to the cytoplasm. The enzyme catalyses tRNA(Gly) + glycine + ATP = glycyl-tRNA(Gly) + AMP + diphosphate. The polypeptide is Glycine--tRNA ligase beta subunit (Colwellia psychrerythraea (strain 34H / ATCC BAA-681) (Vibrio psychroerythus)).